We begin with the raw amino-acid sequence, 185 residues long: MKCIVGLGNPGAKYTNTRHNIGFLAIDALAKEHGIKLTESKFKAVFGTGMIKGERVVLVKPLTYMNLSGEAVRPLLDFYKIAVEDVLVIYDDLDLPLEKMRLRSKGSAGGHNGVKSLIQHLGTQDIKRLKLGVGRPPAPIQVIDWVLMPFAKSEQTTLQHVLSDSVNIATDFIDTPFLALMNRYN.

A tRNA-binding site is contributed by Y14. H19 acts as the Proton acceptor in catalysis. The tRNA site is built by Y64, N66, and N112.

It belongs to the PTH family. In terms of assembly, monomer.

It is found in the cytoplasm. The catalysed reaction is an N-acyl-L-alpha-aminoacyl-tRNA + H2O = an N-acyl-L-amino acid + a tRNA + H(+). In terms of biological role, hydrolyzes ribosome-free peptidyl-tRNAs (with 1 or more amino acids incorporated), which drop off the ribosome during protein synthesis, or as a result of ribosome stalling. Its function is as follows. Catalyzes the release of premature peptidyl moieties from peptidyl-tRNA molecules trapped in stalled 50S ribosomal subunits, and thus maintains levels of free tRNAs and 50S ribosomes. The polypeptide is Peptidyl-tRNA hydrolase (Exiguobacterium sibiricum (strain DSM 17290 / CCUG 55495 / CIP 109462 / JCM 13490 / 255-15)).